A 167-amino-acid chain; its full sequence is Ubiquitin-fold modifier-conjugating enzyme 1 (167 aa).

The active-site Glycyl thioester intermediate is the Cys116.

Belongs to the ubiquitin-conjugating enzyme family. UFC1 subfamily.

Functionally, E2-like enzyme which forms an intermediate with UFM1 via a thioester linkage. This chain is Ubiquitin-fold modifier-conjugating enzyme 1, found in Anopheles gambiae (African malaria mosquito).